Reading from the N-terminus, the 443-residue chain is Ribulose bisphosphate carboxylase large chain (443 aa).

Positions 89 and 139 each coordinate substrate. The active-site Proton acceptor is the Lys141. Lys143 is a binding site for substrate. Positions 167, 169, and 170 each coordinate Mg(2+). Lys167 carries the N6-carboxylysine modification. Residue His260 is the Proton acceptor of the active site. Residues Arg261, His293, and Ser345 each coordinate substrate.

The protein belongs to the RuBisCO large chain family. Type I subfamily. Heterohexadecamer of 8 large chains and 8 small chains; disulfide-linked. The disulfide link is formed within the large subunit homodimers. Requires Mg(2+) as cofactor. The disulfide bond which can form in the large chain dimeric partners within the hexadecamer appears to be associated with oxidative stress and protein turnover.

Its subcellular location is the plastid. It localises to the chloroplast. The enzyme catalyses 2 (2R)-3-phosphoglycerate + 2 H(+) = D-ribulose 1,5-bisphosphate + CO2 + H2O. The catalysed reaction is D-ribulose 1,5-bisphosphate + O2 = 2-phosphoglycolate + (2R)-3-phosphoglycerate + 2 H(+). In terms of biological role, ruBisCO catalyzes two reactions: the carboxylation of D-ribulose 1,5-bisphosphate, the primary event in carbon dioxide fixation, as well as the oxidative fragmentation of the pentose substrate in the photorespiration process. Both reactions occur simultaneously and in competition at the same active site. This Verbena bonariensis (Argentinian vervain) protein is Ribulose bisphosphate carboxylase large chain.